The following is a 436-amino-acid chain: Tol-Pal system protein TolB (436 aa).

An N-terminal signal peptide occupies residues 1–28 (MEMLRRNFFRLLMVLVAGCGLIASPAKA).

It belongs to the TolB family. The Tol-Pal system is composed of five core proteins: the inner membrane proteins TolA, TolQ and TolR, the periplasmic protein TolB and the outer membrane protein Pal. They form a network linking the inner and outer membranes and the peptidoglycan layer.

The protein localises to the periplasm. Its function is as follows. Part of the Tol-Pal system, which plays a role in outer membrane invagination during cell division and is important for maintaining outer membrane integrity. The chain is Tol-Pal system protein TolB from Sinorhizobium medicae (strain WSM419) (Ensifer medicae).